Reading from the N-terminus, the 151-residue chain is Macrodomain Ter protein (151 aa).

It belongs to the MatP family. As to quaternary structure, homodimer.

The protein resides in the cytoplasm. Its function is as follows. Required for spatial organization of the terminus region of the chromosome (Ter macrodomain) during the cell cycle. Prevents early segregation of duplicated Ter macrodomains during cell division. Binds specifically to matS, which is a 13 bp signature motif repeated within the Ter macrodomain. The polypeptide is Macrodomain Ter protein (Escherichia fergusonii (strain ATCC 35469 / DSM 13698 / CCUG 18766 / IAM 14443 / JCM 21226 / LMG 7866 / NBRC 102419 / NCTC 12128 / CDC 0568-73)).